A 486-amino-acid polypeptide reads, in one-letter code: Cobyric acid synthase (486 aa).

Residues 248-435 (VLNVVVPVLP…LHGLFESPAA (188 aa)) form the GATase cobBQ-type domain. Cysteine 329 acts as the Nucleophile in catalysis. Histidine 427 is an active-site residue.

It belongs to the CobB/CobQ family. CobQ subfamily.

Its pathway is cofactor biosynthesis; adenosylcobalamin biosynthesis. Functionally, catalyzes amidations at positions B, D, E, and G on adenosylcobyrinic A,C-diamide. NH(2) groups are provided by glutamine, and one molecule of ATP is hydrogenolyzed for each amidation. This is Cobyric acid synthase from Pseudomonas syringae pv. tomato (strain ATCC BAA-871 / DC3000).